Reading from the N-terminus, the 68-residue chain is Conotoxin PnMLKM-011 (68 aa).

A signal peptide spans Met-1–Leu-17. The propeptide occupies Gln-18–Arg-51. Disulfide bonds link Cys-53-Cys-65, Cys-54-Cys-63, and Cys-59-Cys-66. The residue at position 67 (Leu-67) is a Leucine amide.

It belongs to the conotoxin M superfamily. In terms of tissue distribution, expressed by the venom duct.

The protein localises to the secreted. The polypeptide is Conotoxin PnMLKM-011 (Conus pennaceus (Feathered cone)).